Consider the following 349-residue polypeptide: MSEEKQHKRRVHYSGKYPKKFEEKYKELNPEKYKDTIEHVISKGNTPAGMHISIMVKEIIDFLDIKPGQTGFDATLGYGGHTRAMLEKLEGQGHMFATDVDPIESEKTKKRLAEAGFGEDILTIKLQNFCTIDEIAKEVGGFDFILADLGVSSMQIDNPERGFSFKVDGPLDLRLNPNAGISAAERLDNISREELSGMLYENSDEPYCEELAKAITDEIRKGNRIGTTTKLRHIIEQTLDFLPEKDKKDIIKKTCQRTFQALRIDVNHEFEVLYEFMEKLPGALKPGGRAAILTFHSGEDKLVKKALKAGYKAGIYSDYSKDVIRPSAQECAQNGRARSTKMRWAVRAE.

S-adenosyl-L-methionine-binding positions include 79–81 (GGH), Asp-99, Phe-129, Asp-148, and Gln-155.

The protein belongs to the methyltransferase superfamily. RsmH family.

The protein localises to the cytoplasm. The catalysed reaction is cytidine(1402) in 16S rRNA + S-adenosyl-L-methionine = N(4)-methylcytidine(1402) in 16S rRNA + S-adenosyl-L-homocysteine + H(+). In terms of biological role, specifically methylates the N4 position of cytidine in position 1402 (C1402) of 16S rRNA. This Agathobacter rectalis (strain ATCC 33656 / DSM 3377 / JCM 17463 / KCTC 5835 / VPI 0990) (Eubacterium rectale) protein is Ribosomal RNA small subunit methyltransferase H 1.